Consider the following 435-residue polypeptide: 5-methylthioadenosine/S-adenosylhomocysteine deaminase (435 aa).

Residues histidine 65 and histidine 67 each coordinate Zn(2+). Residues glutamate 94, arginine 150, and histidine 189 each contribute to the substrate site. Histidine 216 is a binding site for Zn(2+). Residues glutamate 219 and aspartate 304 each contribute to the substrate site. Zn(2+) is bound at residue aspartate 304.

It belongs to the metallo-dependent hydrolases superfamily. MTA/SAH deaminase family. Requires Zn(2+) as cofactor.

The catalysed reaction is S-adenosyl-L-homocysteine + H2O + H(+) = S-inosyl-L-homocysteine + NH4(+). It carries out the reaction S-methyl-5'-thioadenosine + H2O + H(+) = S-methyl-5'-thioinosine + NH4(+). In terms of biological role, catalyzes the deamination of 5-methylthioadenosine and S-adenosyl-L-homocysteine into 5-methylthioinosine and S-inosyl-L-homocysteine, respectively. Is also able to deaminate adenosine. This is 5-methylthioadenosine/S-adenosylhomocysteine deaminase from Bacillus thuringiensis (strain Al Hakam).